The primary structure comprises 241 residues: Putative integrase ORF241 (241 aa).

The Tyr recombinase domain occupies 82–241; the sequence is VEAKKTLVSA…AIEMLRKLAD (160 aa). Residues R119, K144, H191, R194, and H217 contribute to the active site. Y226 acts as the O-(3'-phospho-DNA)-tyrosine intermediate in catalysis.

It belongs to the 'phage' integrase family.

In terms of biological role, this protein may encode an integrase, which is necessary for integration of the viral DNA into host genome. The sequence is that of Putative integrase ORF241 from Acidianus convivator (ATV).